The chain runs to 534 residues: Cytochrome c oxidase subunit 1 (534 aa).

The helical transmembrane segment at 16–36 threads the bilayer; the sequence is VLYFIFAIFCGMAGTAMSLII. Residues E39, A42, and G44 each coordinate Ca(2+). 6 helical membrane passes run 57-77, 101-121, 147-167, 182-202, 235-255, and 267-287; these read VLVV…ALIG, ISFW…LVES, AIFA…NFIV, LPLF…SLPV, LFWF…FGII, and VFGE…GFLV. H62 is a Fe(II)-heme a binding site. Cu cation is bound at residue H241. Residues 241-245 constitute a cross-link (1'-histidyl-3'-tyrosine (His-Tyr)); sequence HPEVY. Y245 is an O2 binding site. The Cu cation site is built by H290 and H291. Transmembrane regions (helical) follow at residues 310–330 and 338–358; these read MIIA…IYGG and MLYA…GVAL. Positions 368 and 369 each coordinate Mg(2+). Helical transmembrane passes span 372–392 and 412–432; these read YVVG…LFAG and IQFW…HFLG. H376 contributes to the heme a3 binding site. Fe(II)-heme a is bound at residue H378. P441 serves as a coordination point for Ca(2+). The chain crosses the membrane as a helical span at residues 452–472; that stretch reads YVASIGSIIAVFSLFLFIYIL.

The protein belongs to the heme-copper respiratory oxidase family. As to quaternary structure, component of the cytochrome c oxidase (complex IV, CIV), a multisubunit enzyme composed of a catalytic core of 3 subunits and several supernumerary subunits. The complex exists as a monomer or a dimer and forms supercomplexes (SCs) in the inner mitochondrial membrane with ubiquinol-cytochrome c oxidoreductase (cytochrome b-c1 complex, complex III, CIII). Heme is required as a cofactor. The cofactor is Cu cation.

It localises to the mitochondrion inner membrane. The enzyme catalyses 4 Fe(II)-[cytochrome c] + O2 + 8 H(+)(in) = 4 Fe(III)-[cytochrome c] + 2 H2O + 4 H(+)(out). It functions in the pathway energy metabolism; oxidative phosphorylation. In terms of biological role, component of the cytochrome c oxidase, the last enzyme in the mitochondrial electron transport chain which drives oxidative phosphorylation. The respiratory chain contains 3 multisubunit complexes succinate dehydrogenase (complex II, CII), ubiquinol-cytochrome c oxidoreductase (cytochrome b-c1 complex, complex III, CIII) and cytochrome c oxidase (complex IV, CIV), that cooperate to transfer electrons derived from NADH and succinate to molecular oxygen, creating an electrochemical gradient over the inner membrane that drives transmembrane transport and the ATP synthase. Cytochrome c oxidase is the component of the respiratory chain that catalyzes the reduction of oxygen to water. Electrons originating from reduced cytochrome c in the intermembrane space (IMS) are transferred via the dinuclear copper A center (CU(A)) of subunit 2 and heme A of subunit 1 to the active site in subunit 1, a binuclear center (BNC) formed by heme A3 and copper B (CU(B)). The BNC reduces molecular oxygen to 2 water molecules using 4 electrons from cytochrome c in the IMS and 4 protons from the mitochondrial matrix. The protein is Cytochrome c oxidase subunit 1 (COX1) of Kluyveromyces lactis (strain ATCC 8585 / CBS 2359 / DSM 70799 / NBRC 1267 / NRRL Y-1140 / WM37) (Yeast).